We begin with the raw amino-acid sequence, 166 residues long: Ribosome maturation factor RimP (166 aa).

Belongs to the RimP family.

The protein resides in the cytoplasm. Its function is as follows. Required for maturation of 30S ribosomal subunits. The protein is Ribosome maturation factor RimP of Psychrobacter cryohalolentis (strain ATCC BAA-1226 / DSM 17306 / VKM B-2378 / K5).